The primary structure comprises 179 residues: Adenylyl-sulfate kinase (179 aa).

13-20 (GLSGAGKS) is an ATP binding site. The active-site Phosphoserine intermediate is S87.

The protein belongs to the APS kinase family.

The catalysed reaction is adenosine 5'-phosphosulfate + ATP = 3'-phosphoadenylyl sulfate + ADP + H(+). Its pathway is sulfur metabolism; hydrogen sulfide biosynthesis; sulfite from sulfate: step 2/3. In terms of biological role, catalyzes the synthesis of activated sulfate. The polypeptide is Adenylyl-sulfate kinase (Paraburkholderia xenovorans (strain LB400)).